Consider the following 237-residue polypeptide: ATP synthase subunit a (237 aa).

5 helical membrane passes run 17–37 (LSDM…AVAA), 75–95 (FLTL…LGLP), 112–132 (DATV…YYGV), 179–201 (ILLG…GAAI), and 214–234 (GTIQ…HKVS).

Belongs to the ATPase A chain family. In terms of assembly, F-type ATPases have 2 components, CF(1) - the catalytic core - and CF(0) - the membrane proton channel. CF(1) has five subunits: alpha(3), beta(3), gamma(1), delta(1), epsilon(1). CF(0) has three main subunits: a(1), b(2) and c(9-12). The alpha and beta chains form an alternating ring which encloses part of the gamma chain. CF(1) is attached to CF(0) by a central stalk formed by the gamma and epsilon chains, while a peripheral stalk is formed by the delta and b chains.

Its subcellular location is the cell membrane. Key component of the proton channel; it plays a direct role in the translocation of protons across the membrane. The sequence is that of ATP synthase subunit a from Geobacillus kaustophilus (strain HTA426).